The primary structure comprises 706 residues: Polyribonucleotide nucleotidyltransferase (706 aa).

2 residues coordinate Mg(2+): Asp-487 and Asp-493. The KH domain occupies 553-612 (PRLFTMKINQDKIREVIGKGGETIRAITAETGTEINIAEDGTITIAATTQEAGDAAKKRI). The 71-residue stretch at 622-692 (GKVYEGTVVK…DRGRVRLSIK (71 aa)) folds into the S1 motif domain.

The protein belongs to the polyribonucleotide nucleotidyltransferase family. Mg(2+) is required as a cofactor.

It is found in the cytoplasm. The enzyme catalyses RNA(n+1) + phosphate = RNA(n) + a ribonucleoside 5'-diphosphate. Its function is as follows. Involved in mRNA degradation. Catalyzes the phosphorolysis of single-stranded polyribonucleotides processively in the 3'- to 5'-direction. The chain is Polyribonucleotide nucleotidyltransferase from Neisseria meningitidis serogroup A / serotype 4A (strain DSM 15465 / Z2491).